The following is a 238-amino-acid chain: tRNA (guanine-N(7)-)-methyltransferase (238 aa).

S-adenosyl-L-methionine contacts are provided by Glu-68, Glu-93, Asp-120, and Asp-143. The active site involves Asp-143. Substrate-binding positions include Lys-147, Asp-179, and Thr-216–Glu-219.

This sequence belongs to the class I-like SAM-binding methyltransferase superfamily. TrmB family.

It carries out the reaction guanosine(46) in tRNA + S-adenosyl-L-methionine = N(7)-methylguanosine(46) in tRNA + S-adenosyl-L-homocysteine. Its pathway is tRNA modification; N(7)-methylguanine-tRNA biosynthesis. Functionally, catalyzes the formation of N(7)-methylguanine at position 46 (m7G46) in tRNA. This Shewanella denitrificans (strain OS217 / ATCC BAA-1090 / DSM 15013) protein is tRNA (guanine-N(7)-)-methyltransferase.